Reading from the N-terminus, the 147-residue chain is uncharacterized protein (147 aa).

Residues 29-147 (PYGNNSVHQG…GHHHGHHHKH (119 aa)) are disordered. 2 stretches are compositionally biased toward polar residues: residues 34–45 (SVHQGQPHTDQN) and 60–73 (PQAQYGNAGQNQPS). The span at 75 to 92 (PFGGAGYTGPTAGTGFGN) shows a compositional bias: gly residues. Residues 122–147 (DGHHKKHGRKEHDHHHGHHHGHHHKH) are compositionally biased toward basic residues.

This is an uncharacterized protein from Caenorhabditis elegans.